A 215-amino-acid polypeptide reads, in one-letter code: Cytochrome b6 (215 aa).

A helical transmembrane segment spans residues 32-52 (IFYCLGGITLVCFLIQFATGF). A heme c-binding site is contributed by Cys35. Residues His86 and His100 each coordinate heme b. Transmembrane regions (helical) follow at residues 90–110 (ASMM…TGGF), 116–136 (LTWV…VTGY), and 186–206 (LHTF…FLMI). Residues His187 and His202 each coordinate heme b.

The protein belongs to the cytochrome b family. PetB subfamily. In terms of assembly, the 4 large subunits of the cytochrome b6-f complex are cytochrome b6, subunit IV (17 kDa polypeptide, PetD), cytochrome f and the Rieske protein, while the 4 small subunits are PetG, PetL, PetM and PetN. The complex functions as a dimer. The cofactor is heme b. Heme c is required as a cofactor.

Its subcellular location is the cellular thylakoid membrane. Functionally, component of the cytochrome b6-f complex, which mediates electron transfer between photosystem II (PSII) and photosystem I (PSI), cyclic electron flow around PSI, and state transitions. The chain is Cytochrome b6 from Synechococcus sp. (strain JA-3-3Ab) (Cyanobacteria bacterium Yellowstone A-Prime).